The sequence spans 168 residues: MIMATITLKGNSIHTAGELPAVGSQLPAFTLVKSDLSEVSPADFAGKKLVLNIFPSLDTAVCAASVRRFNKEAGERGDAVVLCISADLPFAQGRFCTTEGLDNVVPLSVYRSPEFGLDYGLTITDGPLKGLLSRAVIVTDASGKVLYAEQVPEIVQEPDYDKALAALA.

Residues 20–168 (PAVGSQLPAF…DYDKALAALA (149 aa)) enclose the Thioredoxin domain. Catalysis depends on Cys-62, which acts as the Cysteine sulfenic acid (-SOH) intermediate. Cys-62 and Cys-96 are oxidised to a cystine.

Belongs to the peroxiredoxin family. Tpx subfamily. In terms of assembly, homodimer.

The catalysed reaction is a hydroperoxide + [thioredoxin]-dithiol = an alcohol + [thioredoxin]-disulfide + H2O. Thiol-specific peroxidase that catalyzes the reduction of hydrogen peroxide and organic hydroperoxides to water and alcohols, respectively. Plays a role in cell protection against oxidative stress by detoxifying peroxides. The chain is Thiol peroxidase from Chlorobaculum tepidum (strain ATCC 49652 / DSM 12025 / NBRC 103806 / TLS) (Chlorobium tepidum).